A 417-amino-acid chain; its full sequence is NADH-quinone oxidoreductase subunit D (417 aa).

This sequence belongs to the complex I 49 kDa subunit family. NDH-1 is composed of 14 different subunits. Subunits NuoB, C, D, E, F, and G constitute the peripheral sector of the complex.

It localises to the cell inner membrane. It catalyses the reaction a quinone + NADH + 5 H(+)(in) = a quinol + NAD(+) + 4 H(+)(out). NDH-1 shuttles electrons from NADH, via FMN and iron-sulfur (Fe-S) centers, to quinones in the respiratory chain. The immediate electron acceptor for the enzyme in this species is believed to be ubiquinone. Couples the redox reaction to proton translocation (for every two electrons transferred, four hydrogen ions are translocated across the cytoplasmic membrane), and thus conserves the redox energy in a proton gradient. This is NADH-quinone oxidoreductase subunit D from Burkholderia lata (strain ATCC 17760 / DSM 23089 / LMG 22485 / NCIMB 9086 / R18194 / 383).